A 321-amino-acid chain; its full sequence is MISIALEHVLTHISFSIISIVISVHLIKFLVPEIIGLCDSLEKGIITTSFCITGLLIIRWVYSRHLPLSNLYESLMFLSWGFSTIHIFSKIWNHQNDLSTITATGAIYCQAFATSGILNEMHQSAILVPALQSQWLMMHVSMMLLSYGALLCGSLLSVSLLVITFRKNIEILEKMNQFSFLIESFLLSEVRPLKKKKSFLQNISFLSFKNYHKYQFTQQLDHWSYRIINLGFTLLTIGILSGAVWANEAWGSYWNWDPKETWAFITWTIFATYLHTRTNQRMPGMHSAIVASIGFLIIWICYFGVNLLGIGLHSYGAFTSN.

The next 7 helical transmembrane spans lie at 17–37 (IISI…IIGL), 41–61 (LEKG…IRWV), 68–88 (LSNL…IHIF), 143–163 (MLLS…LLVI), 227–247 (IINL…VWAN), 260–277 (ETWA…LHTR), and 288–308 (AIVA…VNLL).

It belongs to the CcmF/CycK/Ccl1/NrfE/CcsA family. In terms of assembly, may interact with Ccs1.

It is found in the plastid. Its subcellular location is the chloroplast thylakoid membrane. In terms of biological role, required during biogenesis of c-type cytochromes (cytochrome c6 and cytochrome f) at the step of heme attachment. The polypeptide is Cytochrome c biogenesis protein CcsA (Piper cenocladum (Ant piper)).